Reading from the N-terminus, the 606-residue chain is R-linalool synthase, chloroplastic (606 aa).

A chloroplast-targeting transit peptide spans Met-1–Ser-51. Arg-326, Asp-363, Asp-367, Arg-504, and Asp-507 together coordinate (2E)-geranyl diphosphate. Mg(2+) is bound by residues Asp-363 and Asp-367. The short motif at Asp-363–Asp-367 is the DDXXD motif element. 3 residues coordinate Mg(2+): Asp-507, Thr-511, and Glu-515.

The protein belongs to the terpene synthase family. Tpsb subfamily. It depends on Mg(2+) as a cofactor. Mn(2+) serves as cofactor.

It is found in the plastid. Its subcellular location is the chloroplast. It catalyses the reaction (2E)-geranyl diphosphate + H2O = (R)-linalool + diphosphate. It participates in secondary metabolite biosynthesis; terpenoid biosynthesis. Its function is as follows. Monoterpene synthase that catalyzes the formation of (3R)-linalool from geranyl diphosphate, but not from farnesyl diphosphate or geranylgeranyl diphosphate. In Mentha aquatica (Water mint), this protein is R-linalool synthase, chloroplastic.